The following is a 121-amino-acid chain: uncharacterized protein (121 aa).

The protein resides in the mitochondrion. This is an uncharacterized protein from Arabidopsis thaliana (Mouse-ear cress).